An 850-amino-acid chain; its full sequence is MPGPRPRKGPKTSGQGAETAKQLGLFVEFNPEDMLLGMDETEDDGDLEAELLALTGETGSTSRKPAPKGRAPLPMAHIEKLAADCMRDVEEEGEEEEGLEDDADLLTELQEVLGVDEETGLVDDSEETSPDLSEEKTRDNTEQPVAPAAFQQALPAAVAQAGGPRGLQALLEERIQNYREAAASAKEAGEAAKARRCERGLKTLESQLATVRKGGKICEDEIPPPVALGKRPPAHQERPSKDSEIDSAGSCAMDPGDLSQPESSLPAVAALPDSDPDPQALLLARQREYKAAALSAKRAGDLDRARELMRIGKRFGTVLEALEKGQPVDLSGMPPAPEDLKALPQASEASAATQVLSPAVEQMQPVMSSDLPATPAAPAEPKTVLDALQQRLNRYREAGIQARASGDERKARMHDRIAKQYQDAIRAHQAGRKVDFAELPVPPGFPPIPGLEPRKDTEEDSVTATLAAAQKLASEDTALVDEDEERDTPAQAPLAKKPAQPLVPSSHLLNEPKASSSKESLSPSVREQVTLLEARKLQYQRAALQAKRRQDLEQAKSHLRVAKSLEAQIIQARAGQPIDLSKVPSPLTDEEGDFILIHHEDLRLSQKAEEVYAQLQKILLEQHEKCLLFSKQFMHQGNVAETTRFEKLAEDRKKQLEILQLAQAQGLDPPSHHFELKTLQTVRIFSELNSTEMHLIIVRGMNLPAPPGVTPDDLDAFVRFEFHYPNSDQAQKSKTAVVKNTNSPEFEQVFKLNINRNHRGFRRVIQSKGIKFEIFHKGSFFRSDKLVGTAHLKLERLEKECEIREIMEVLDGRKPTGGKLEVKVRLREPLSSQDVQMVTENWLVLEPRGL.

Residues 1–10 show a composition bias toward basic residues; it reads MPGPRPRKGP. Disordered stretches follow at residues 1–21, 54–73, and 114–145; these read MPGP…ETAK, LTGE…RAPL, and GVDE…EQPV. Residues 114 to 129 show a composition bias toward acidic residues; it reads GVDEETGLVDDSEETS. The stretch at 167–213 forms a coiled coil; the sequence is LQALLEERIQNYREAAASAKEAGEAAKARRCERGLKTLESQLATVRK. Disordered regions lie at residues 215-277 and 436-525; these read GKIC…SDPD and FAEL…SPSV. The segment covering 234-244 has biased composition (basic and acidic residues); sequence AHQERPSKDSE. Residues 440–450 show a composition bias toward pro residues; the sequence is PVPPGFPPIPG. Low complexity-rich tracts occupy residues 489 to 502 and 511 to 524; these read PAQA…AQPL and EPKA…LSPS. Ser-585 carries the post-translational modification Phosphoserine. Position 588 is a phosphothreonine (Thr-588). The 140-residue stretch at 668-807 folds into the C2 domain; sequence DPPSHHFELK…EKECEIREIM (140 aa).

In terms of assembly, interacts with CHMP4B. Expressed in epididymal sperm but not in testicular sperm (at protein level).

It is found in the nucleus. Functionally, transcription factor that binds specifically to the DRE (dual repressor element) and represses HTR1A gene transcription in neuronal cells. This is Coiled-coil and C2 domain-containing protein 1B (Cc2d1b) from Rattus norvegicus (Rat).